We begin with the raw amino-acid sequence, 146 residues long: Large ribosomal subunit protein uL15 (146 aa).

Residues 1–54 are disordered; that stretch reads MKLHELKPAAGSKKAPKRIGRGTGSGLGRNAGKGEKGQNARSGGGVRPGFEGGQ. 2 stretches are compositionally biased toward gly residues: residues 21 to 31 and 42 to 52; these read RGTGSGLGRNA and SGGGVRPGFEG.

It belongs to the universal ribosomal protein uL15 family. Part of the 50S ribosomal subunit.

In terms of biological role, binds to the 23S rRNA. The chain is Large ribosomal subunit protein uL15 from Clostridium beijerinckii (strain ATCC 51743 / NCIMB 8052) (Clostridium acetobutylicum).